A 914-amino-acid chain; its full sequence is UPF0182 protein PTH_1387 (914 aa).

7 helical membrane passes run 7–27 (FAAYVLAGFGLIFLALTIAGA), 48–68 (IIISDLGLRLAVGLTFFVLLF), 109–129 (LLLLAFIALSALMAFLFNFTV), 173–193 (INWVILVSAFWVLAAYFVVYF), 209–229 (YHFSFLAAIFFGLKAAGYQLE), 252–272 (TLLAYKVLTYIALLCALAILI), and 281–301 (LVIYSIGVLLIASVLLGGIYP).

This sequence belongs to the UPF0182 family.

The protein localises to the cell membrane. This Pelotomaculum thermopropionicum (strain DSM 13744 / JCM 10971 / SI) protein is UPF0182 protein PTH_1387.